The primary structure comprises 311 residues: MKTLALQLQGYLDHLTIERGVAANTLSSYRRDLRRYSKHLEERGITDLAKVGEHDVSEFLVALRRGDPDSGTAALSAVSAARALIAVRGLHRFAAAEGLAELDVARAVRPPTPSRRLPKSLTIDEVLSLLEGAGGDKPSDGPLTLRNRAVLELLYSTGARISEAVGLDLDDIDTHARSVLLRGKGGKQRLVPVGRPAVHALDAYLVRGRPDLARRGRGTAAIFLNARGGRLSRQSAWQVLQDAAERAGITAGVSPHMLRHSFATHLLEGGADVRVVQELLGHASVTTTQIYTLVTVHALREVWAGAHPRAR.

Residues 2–95 (KTLALQLQGY…AVRGLHRFAA (94 aa)) form the Core-binding (CB) domain. Positions 116–304 (RLPKSLTIDE…TVHALREVWA (189 aa)) constitute a Tyr recombinase domain. Active-site residues include Arg-160, Lys-184, His-256, Arg-259, and His-282. Tyr-291 serves as the catalytic O-(3'-phospho-DNA)-tyrosine intermediate.

The protein belongs to the 'phage' integrase family. XerD subfamily. In terms of assembly, forms a cyclic heterotetrameric complex composed of two molecules of XerC and two molecules of XerD.

Its subcellular location is the cytoplasm. Functionally, site-specific tyrosine recombinase, which acts by catalyzing the cutting and rejoining of the recombining DNA molecules. The XerC-XerD complex is essential to convert dimers of the bacterial chromosome into monomers to permit their segregation at cell division. It also contributes to the segregational stability of plasmids. This chain is Tyrosine recombinase XerD, found in Mycobacterium tuberculosis (strain CDC 1551 / Oshkosh).